The chain runs to 78 residues: Putative membrane protein insertion efficiency factor (78 aa).

This sequence belongs to the UPF0161 family.

It is found in the cell inner membrane. Its function is as follows. Could be involved in insertion of integral membrane proteins into the membrane. The chain is Putative membrane protein insertion efficiency factor from Thiobacillus denitrificans (strain ATCC 25259 / T1).